An 87-amino-acid polypeptide reads, in one-letter code: RNA-binding protein Hfq (87 aa).

The 60-residue stretch at Asp-9–Val-68 folds into the Sm domain. The tract at residues Ala-65–Asp-87 is disordered. Residues His-71–Asp-87 are compositionally biased toward basic and acidic residues.

This sequence belongs to the Hfq family. Homohexamer.

Functionally, RNA chaperone that binds small regulatory RNA (sRNAs) and mRNAs to facilitate mRNA translational regulation in response to envelope stress, environmental stress and changes in metabolite concentrations. Also binds with high specificity to tRNAs. In Vibrio parahaemolyticus serotype O3:K6 (strain RIMD 2210633), this protein is RNA-binding protein Hfq.